The sequence spans 546 residues: CTP synthase (546 aa).

The segment at 1–269 is amidoligase domain; it reads MADTKYIFVT…DKVTLKKLAL (269 aa). Residue Ser15 coordinates CTP. Ser15 provides a ligand contact to UTP. 16–21 lines the ATP pocket; that stretch reads SLGKGI. L-glutamine is bound at residue Tyr56. Asp73 contributes to the ATP binding site. Mg(2+) contacts are provided by Asp73 and Glu143. CTP contacts are provided by residues 150 to 152, 190 to 195, and Lys226; these read DIE and KTKPTQ. Residues 190–195 and Lys226 contribute to the UTP site; that span reads KTKPTQ. The Glutamine amidotransferase type-1 domain occupies 295 to 537; the sequence is HIGLIGKYVE…VKAAHEHSVK (243 aa). Position 357 (Gly357) interacts with L-glutamine. The Nucleophile; for glutamine hydrolysis role is filled by Cys384. L-glutamine contacts are provided by residues 385 to 388, Glu408, and Arg465; that span reads LGMQ. Residues His510 and Glu512 contribute to the active site.

Belongs to the CTP synthase family. Homotetramer.

It catalyses the reaction UTP + L-glutamine + ATP + H2O = CTP + L-glutamate + ADP + phosphate + 2 H(+). It carries out the reaction L-glutamine + H2O = L-glutamate + NH4(+). The enzyme catalyses UTP + NH4(+) + ATP = CTP + ADP + phosphate + 2 H(+). The protein operates within pyrimidine metabolism; CTP biosynthesis via de novo pathway; CTP from UDP: step 2/2. Allosterically activated by GTP, when glutamine is the substrate; GTP has no effect on the reaction when ammonia is the substrate. The allosteric effector GTP functions by stabilizing the protein conformation that binds the tetrahedral intermediate(s) formed during glutamine hydrolysis. Inhibited by the product CTP, via allosteric rather than competitive inhibition. In terms of biological role, catalyzes the ATP-dependent amination of UTP to CTP with either L-glutamine or ammonia as the source of nitrogen. Regulates intracellular CTP levels through interactions with the four ribonucleotide triphosphates. The sequence is that of CTP synthase from Christiangramia forsetii (strain DSM 17595 / CGMCC 1.15422 / KT0803) (Gramella forsetii).